The sequence spans 283 residues: Phosphatidylglycerol--prolipoprotein diacylglyceryl transferase (283 aa).

3 helical membrane passes run 17–37 (LAVR…TFLG), 56–76 (FLTW…VLFY), and 88–108 (IFKV…VVIA). Residue R139 participates in a 1,2-diacyl-sn-glycero-3-phospho-(1'-sn-glycerol) binding. The next 2 membrane-spanning stretches (helical) occupy residues 222-242 (GQVA…AEFA) and 255-275 (GLSM…VGFV).

Belongs to the Lgt family.

It is found in the cell inner membrane. The enzyme catalyses L-cysteinyl-[prolipoprotein] + a 1,2-diacyl-sn-glycero-3-phospho-(1'-sn-glycerol) = an S-1,2-diacyl-sn-glyceryl-L-cysteinyl-[prolipoprotein] + sn-glycerol 1-phosphate + H(+). It functions in the pathway protein modification; lipoprotein biosynthesis (diacylglyceryl transfer). In terms of biological role, catalyzes the transfer of the diacylglyceryl group from phosphatidylglycerol to the sulfhydryl group of the N-terminal cysteine of a prolipoprotein, the first step in the formation of mature lipoproteins. This Neisseria meningitidis serogroup B (strain ATCC BAA-335 / MC58) protein is Phosphatidylglycerol--prolipoprotein diacylglyceryl transferase.